Here is a 202-residue protein sequence, read N- to C-terminus: Tetranectin (202 aa).

Residues 1 to 21 (MELWGAYLLLCLFSLLTQVTT) form the signal peptide. O-linked (GalNAc...) threonine glycosylation occurs at T25. 3 cysteine pairs are disulfide-bonded: C71–C81, C98–C197, and C173–C189. A C-type lectin domain is found at 77 to 198 (VHMKCFLAFT…CRDQLPYICQ (122 aa)).

In terms of assembly, homotrimer. As to expression, found in plasma.

It localises to the secreted. Tetranectin binds to plasminogen and to isolated kringle 4. May be involved in the packaging of molecules destined for exocytosis. Plays a role in retinal function. In Homo sapiens (Human), this protein is Tetranectin (CLEC3B).